The chain runs to 215 residues: Pyrrolidone-carboxylate peptidase (215 aa).

Residues Glu80, Cys143, and His167 contribute to the active site.

It belongs to the peptidase C15 family. As to quaternary structure, homotetramer.

Its subcellular location is the cytoplasm. It carries out the reaction Release of an N-terminal pyroglutamyl group from a polypeptide, the second amino acid generally not being Pro.. Functionally, removes 5-oxoproline from various penultimate amino acid residues except L-proline. This Bacillus cereus (strain Q1) protein is Pyrrolidone-carboxylate peptidase.